Reading from the N-terminus, the 526-residue chain is 2-succinyl-5-enolpyruvyl-6-hydroxy-3-cyclohexene-1-carboxylate synthase (526 aa).

This sequence belongs to the TPP enzyme family. MenD subfamily. Homodimer. It depends on Mg(2+) as a cofactor. Requires Mn(2+) as cofactor. The cofactor is thiamine diphosphate.

The enzyme catalyses isochorismate + 2-oxoglutarate + H(+) = 5-enolpyruvoyl-6-hydroxy-2-succinyl-cyclohex-3-ene-1-carboxylate + CO2. It participates in quinol/quinone metabolism; 1,4-dihydroxy-2-naphthoate biosynthesis; 1,4-dihydroxy-2-naphthoate from chorismate: step 2/7. The protein operates within quinol/quinone metabolism; menaquinone biosynthesis. Its function is as follows. Catalyzes the thiamine diphosphate-dependent decarboxylation of 2-oxoglutarate and the subsequent addition of the resulting succinic semialdehyde-thiamine pyrophosphate anion to isochorismate to yield 2-succinyl-5-enolpyruvyl-6-hydroxy-3-cyclohexene-1-carboxylate (SEPHCHC). This Bdellovibrio bacteriovorus (strain ATCC 15356 / DSM 50701 / NCIMB 9529 / HD100) protein is 2-succinyl-5-enolpyruvyl-6-hydroxy-3-cyclohexene-1-carboxylate synthase.